The primary structure comprises 342 residues: Prostasin (342 aa).

An N-terminal signal peptide occupies residues 1–29; it reads MAPRVGLGLGQLEAVTILLLLGLLQSGIR. Positions 30 to 32 are cleaved as a propeptide — activation peptide; sequence ADG. 2 disulfides stabilise this stretch: Cys37–Cys154 and Cys70–Cys86. In terms of domain architecture, Peptidase S1 spans 45–286; that stretch reads ITGGGSAKPG…YASWIHHHVA (242 aa). His85 serves as the catalytic Charge relay system. Asn110 carries an N-linked (GlcNAc...) asparagine glycan. Asp134 (charge relay system) is an active-site residue. An N-linked (GlcNAc...) asparagine glycan is attached at Asn159. 3 cysteine pairs are disulfide-bonded: Cys168/Cys244, Cys201/Cys223, and Cys234/Cys262. Ser238 acts as the Charge relay system in catalysis. Residues 320–340 form a helical membrane-spanning segment; that stretch reads LLRPVLFLPLGLTLGLLSLWL. Residues 323 to 342 constitute a propeptide that is removed on maturation; that stretch reads PVLFLPLGLTLGLLSLWLEH.

It belongs to the peptidase S1 family. In terms of assembly, heterodimer of two chains, light and heavy, held by a disulfide bond.

The protein resides in the cell membrane. Its subcellular location is the secreted. It localises to the extracellular space. Functionally, possesses a trypsin-like cleavage specificity with a preference for poly-basic substrates. Stimulates epithelial sodium channel (ENaC) activity through activating cleavage of the gamma subunits (SCNN1G). This is Prostasin (Prss8) from Mus musculus (Mouse).